The sequence spans 117 residues: Dolichyl-diphosphooligosaccharide--protein glycosyltransferase subunit DAD1 (117 aa).

Residues 1-33 lie on the Cytoplasmic side of the membrane; sequence MAKTSSTTKDAQDLFHAIWSAYSATPTNLKIID. A helical membrane pass occupies residues 34 to 54; the sequence is LYVVFAVFTALLQDVYMALVG. The Lumenal portion of the chain corresponds to 55 to 57; it reads PFP. The helical transmembrane segment at 58-78 threads the bilayer; that stretch reads FNSFLSGVLSCVGTAVLAVCL. Residues 79-96 are Cytoplasmic-facing; it reads RIQVNKENKEFKDLGPER. A helical membrane pass occupies residues 97–117; that stretch reads AFADFVLCNLVLHLVIMNFLG.

It belongs to the DAD/OST2 family. In terms of assembly, component of the oligosaccharyltransferase (OST) complex.

Its subcellular location is the endoplasmic reticulum membrane. The protein operates within protein modification; protein glycosylation. Subunit of the oligosaccharyl transferase (OST) complex that catalyzes the initial transfer of a defined glycan (Glc(3)Man(9)GlcNAc(2) in eukaryotes) from the lipid carrier dolichol-pyrophosphate to an asparagine residue within an Asn-X-Ser/Thr consensus motif in nascent polypeptide chains, the first step in protein N-glycosylation. N-glycosylation occurs cotranslationally and the complex associates with the Sec61 complex at the channel-forming translocon complex that mediates protein translocation across the endoplasmic reticulum (ER). All subunits are required for a maximal enzyme activity. This is Dolichyl-diphosphooligosaccharide--protein glycosyltransferase subunit DAD1 (DAD1) from Pisum sativum (Garden pea).